A 342-amino-acid chain; its full sequence is MRAPEFHANAMTSTGCDVCLDPQKSFAKLFKRTVILLAGPTGSGKTDVSLRLAPMIDGEIISVDSMQVYRGMDIGTAKVSWEDRQRIPHYLIDICHVQELFNAVDFYYQAIQACQNILSRNKVPILVGGTGFYFHTFLSGPPQGPSPDCDFRDKLALYIQEHGLSLLYENLCLKDPEYARTITKNDRNKIVRALEIIHLTGKKVSDHKWTKEASECQEYNCRGWFLSPPKELLRDTIHLRCQRMLEDDLIDEVHRLLKQGIRDNSSASRAIGYREWIEFIDQGSPAESYEAVKQKFITNTCHYTKKQRTWFKRYPIFRELPTLGLTAETIAAKIAEDYFLHG.

39 to 46 (GPTGSGKT) contributes to the ATP binding site. 41–46 (TGSGKT) is a binding site for substrate. Residues 64–67 (DSMQ) are interaction with substrate tRNA.

It belongs to the IPP transferase family. As to quaternary structure, monomer. The cofactor is Mg(2+).

The enzyme catalyses adenosine(37) in tRNA + dimethylallyl diphosphate = N(6)-dimethylallyladenosine(37) in tRNA + diphosphate. In terms of biological role, catalyzes the transfer of a dimethylallyl group onto the adenine at position 37 in tRNAs that read codons beginning with uridine, leading to the formation of N6-(dimethylallyl)adenosine (i(6)A). This Chlamydia abortus (strain DSM 27085 / S26/3) (Chlamydophila abortus) protein is tRNA dimethylallyltransferase.